Reading from the N-terminus, the 254-residue chain is Translation initiation factor 2 subunit alpha (254 aa).

An S1 motif domain is found at 10 to 81 (GDLVVVKITE…ERKNVDLSLK (72 aa)).

The protein belongs to the eIF-2-alpha family. Heterotrimer composed of an alpha, a beta and a gamma chain.

Functionally, eIF-2 functions in the early steps of protein synthesis by forming a ternary complex with GTP and initiator tRNA. The protein is Translation initiation factor 2 subunit alpha of Thermoplasma volcanium (strain ATCC 51530 / DSM 4299 / JCM 9571 / NBRC 15438 / GSS1).